We begin with the raw amino-acid sequence, 574 residues long: Serine/arginine repetitive matrix protein 4 (574 aa).

Disordered regions lie at residues 45–217, 257–291, 366–422, 454–508, and 526–574; these read LETP…HGGD, IVQNSESSDGKRRADYDSGNDTSSPPSSKTGITRS, DLIS…SYSL, YCSS…VSSR, and RSRS…RARR. Positions 51–72 are enriched in basic and acidic residues; sequence PKDDEEKVKAKDLVTKTHEKNG. 3 stretches are compositionally biased toward basic residues: residues 73–88, 102–120, and 128–184; these read HIKRRGRKRHSHRRAR, PKTKKKKKKSQRKRRRHRS, and VRKK…HRKA. Over residues 194–217 the composition is skewed to basic and acidic residues; that stretch reads NRSEDCEKSGFRDGGRSSDVHGGD. A compositionally biased stretch (polar residues) spans 275-289; sequence GNDTSSPPSSKTGIT. A compositionally biased stretch (basic and acidic residues) spans 366–385; sequence DLISDRNRSPSHDRYEDGTR. Residues 405-422 are compositionally biased toward low complexity; it reads RSLSSGRRSYSRSSSYSL. The segment covering 454 to 477 has biased composition (basic residues); that stretch reads YCSSCKSRKHSRRRPSSPMRKRRR. Residues 478 to 487 are compositionally biased toward basic and acidic residues; sequence DSPSHLEARR. A compositionally biased stretch (low complexity) spans 496–508; it reads IPYYRPSPSVSSR. Residues 526-539 are compositionally biased toward basic residues; sequence RSRSCSRSRSRSHS. Over residues 540–559 the composition is skewed to low complexity; sequence HTYSSYRSYSRSSSWNSLYS. Residues 560 to 574 show a composition bias toward basic residues; the sequence is RRSRSRSRSYSRARR.

It belongs to the nSR100 family.

The protein resides in the nucleus. Functionally, splicing factor specifically required for neural cell differentiation. Acts in conjunction with nPTB/PTBP2 by binding directly to its regulated target transcripts and promotes neural-specific exon inclusion in many genes that function in neural cell differentiation. Required to promote the inclusion of neural-specific exon 10 in nPTB/PTBP2, leading to increased expression of neural-specific nPTB/PTBP2. This chain is Serine/arginine repetitive matrix protein 4 (srrm4), found in Danio rerio (Zebrafish).